The sequence spans 197 residues: RNA pyrophosphohydrolase (197 aa).

The Nudix hydrolase domain maps to 6–149 (GYRPNVGIVI…KRDVYRRAMK (144 aa)). A Nudix box motif is present at residues 38 to 59 (GGINEGETPEQAMFRELFEEVG). The tract at residues 170–197 (ETKKAETGKKQPYYHKYAPQNKKGRKRR) is disordered.

It belongs to the Nudix hydrolase family. RppH subfamily. The cofactor is a divalent metal cation.

In terms of biological role, accelerates the degradation of transcripts by removing pyrophosphate from the 5'-end of triphosphorylated RNA, leading to a more labile monophosphorylated state that can stimulate subsequent ribonuclease cleavage. This Actinobacillus succinogenes (strain ATCC 55618 / DSM 22257 / CCUG 43843 / 130Z) protein is RNA pyrophosphohydrolase.